The sequence spans 67 residues: uncharacterized protein (67 aa).

2 helical membrane-spanning segments follow: residues 13 to 32 (IACL…GFIV) and 42 to 64 (RLTN…TLGL).

The protein resides in the membrane. This is an uncharacterized protein from Saccharomyces cerevisiae (strain ATCC 204508 / S288c) (Baker's yeast).